A 188-amino-acid polypeptide reads, in one-letter code: CXXC-type zinc finger protein 4 (188 aa).

Residues 1–20 (MHRNDSQRLGKPGGAPESLQ) are disordered. A CXXC-type zinc finger spans residues 122–163 (AKKKRKRCGVCVPCKRLINCGVCSSCRNRKTGHQICKFRKCE). 8 residues coordinate Zn(2+): cysteine 129, cysteine 132, cysteine 135, cysteine 141, cysteine 144, cysteine 147, cysteine 157, and cysteine 162.

Its subcellular location is the cytoplasm. Acts as a negative regulator of the Wnt signaling pathway required for anterior neural structure formation. Binds preferentially to DNA containing cytidine-phosphate-guanosine (CpG) dinucleotides over CpH (H=A, T, and C), hemimethylated-CpG and hemimethylated-hydroxymethyl-CpG. This chain is CXXC-type zinc finger protein 4 (cxxc4), found in Xenopus tropicalis (Western clawed frog).